A 306-amino-acid chain; its full sequence is MRHFLTLKDFNKEELLEMIALAQKIKAQTKQKQFVPYLERQTLGMIFEKSSTRTRVSFETGIYQLGGIGLFLSANDIQLGRGEPMKDTSRVISRMVDMVMIRTFEQSKLEEFAAYSKVPVINGLTDSYHPVQLMTDYLTMIEFGKADDPICAYVGDGNNMTHSWLMLAAKLGFELRVATPKGYECDPDIVADAMEIAKESGAKITFGNDPKEAVKGCDVVTTDTWVSMGQEDEKEIRLKAFEGYMVDEAMMSLAKSDAIFLHCLPAYRGYEVSEETFEKHAEVIFTEAENRLHAQKGIMVWLDQHC.

Residues 51-54 (STRT), Gln78, Arg102, and 129-132 (HPVQ) each bind carbamoyl phosphate. Residues Asn159, Asp223, and 227–228 (SM) each bind L-ornithine. Carbamoyl phosphate contacts are provided by residues 263–264 (CL) and Arg291.

The protein belongs to the aspartate/ornithine carbamoyltransferase superfamily. OTCase family.

Its subcellular location is the cytoplasm. It catalyses the reaction carbamoyl phosphate + L-ornithine = L-citrulline + phosphate + H(+). It participates in amino-acid biosynthesis; L-arginine biosynthesis; L-arginine from L-ornithine and carbamoyl phosphate: step 1/3. In terms of biological role, reversibly catalyzes the transfer of the carbamoyl group from carbamoyl phosphate (CP) to the N(epsilon) atom of ornithine (ORN) to produce L-citrulline. The sequence is that of Ornithine carbamoyltransferase from Sulfurovum sp. (strain NBC37-1).